The chain runs to 82 residues: MFFKKITLIPFVMLINLYRYCISPFIPARCRYYPTCSEYALEALKTHGILKGLYLTTRRLLRCHPLSKRDYYDLVPCKNKKG.

This sequence belongs to the UPF0161 family.

Its subcellular location is the cell inner membrane. Its function is as follows. Could be involved in insertion of integral membrane proteins into the membrane. The polypeptide is Putative membrane protein insertion efficiency factor (Francisella tularensis subsp. holarctica (strain LVS)).